The following is a 502-amino-acid chain: Probable zinc metalloprotease MGG_02107 (502 aa).

The signal sequence occupies residues 1–21 (MRSPPGAVAALASVAAQLATA). Zn(2+) is bound by residues His182, Asp202, and Glu235. Asn250 is a glycosylation site (N-linked (GlcNAc...) asparagine). Position 262 (Asp262) interacts with Zn(2+). Residues 284–307 (QGGSPAGESKERAETRASIGGEND) are disordered. 3 N-linked (GlcNAc...) asparagine glycosylation sites follow: Asn375, Asn417, and Asn427. A Fibronectin type-III domain is found at 414–502 (QVRNVTVDTS…KSPATMPFPG (89 aa)).

This sequence belongs to the peptidase M28 family. M28B subfamily. It depends on Zn(2+) as a cofactor.

The protein resides in the secreted. This Pyricularia oryzae (strain 70-15 / ATCC MYA-4617 / FGSC 8958) (Rice blast fungus) protein is Probable zinc metalloprotease MGG_02107.